The following is a 389-amino-acid chain: UDP-GlcNAc:betaGal beta-1,3-N-acetylglucosaminyltransferase 8 (389 aa).

Residues 1-7 (MRCRKCQ) are Cytoplasmic-facing. The chain crosses the membrane as a helical; Signal-anchor for type II membrane protein span at residues 8–24 (LCLSALLTLLGLKVYIE). Residues 25–389 (WTSESWLKKA…RHLWVPELQC (365 aa)) are Lumenal-facing. The tract at residues 36–57 (PRGALPSPTPPNAEPTLPTNLS) is disordered. N-linked (GlcNAc...) asparagine glycosylation is found at asparagine 55 and asparagine 212.

Belongs to the glycosyltransferase 31 family. In terms of assembly, interacts with B3GNT2; this interaction greatly increases B3GNT2 catalytic activity, independently of B3GNT8 enzymatic activity.

It is found in the golgi apparatus membrane. It functions in the pathway protein modification; protein glycosylation. In terms of biological role, beta-1,3-N-acetylglucosaminyltransferase that plays a role in the elongation of specific branch structures of multiantennary N-glycans. Has strong activity towards tetraantennary N-glycans and 2,6 triantennary glycans. The polypeptide is UDP-GlcNAc:betaGal beta-1,3-N-acetylglucosaminyltransferase 8 (Mus musculus (Mouse)).